Here is a 404-residue protein sequence, read N- to C-terminus: Cysteine desulfurase IscS (404 aa).

Pyridoxal 5'-phosphate contacts are provided by residues 75–76 (AT), N155, Q183, and 203–205 (SSH). K206 bears the N6-(pyridoxal phosphate)lysine mark. T243 provides a ligand contact to pyridoxal 5'-phosphate. C328 (cysteine persulfide intermediate) is an active-site residue. Residue C328 participates in [2Fe-2S] cluster binding.

Belongs to the class-V pyridoxal-phosphate-dependent aminotransferase family. NifS/IscS subfamily. In terms of assembly, homodimer. Forms a heterotetramer with IscU, interacts with other sulfur acceptors. Pyridoxal 5'-phosphate serves as cofactor.

It localises to the cytoplasm. It catalyses the reaction (sulfur carrier)-H + L-cysteine = (sulfur carrier)-SH + L-alanine. The protein operates within cofactor biosynthesis; iron-sulfur cluster biosynthesis. In terms of biological role, master enzyme that delivers sulfur to a number of partners involved in Fe-S cluster assembly, tRNA modification or cofactor biosynthesis. Catalyzes the removal of elemental sulfur atoms from cysteine to produce alanine. Functions as a sulfur delivery protein for Fe-S cluster synthesis onto IscU, an Fe-S scaffold assembly protein, as well as other S acceptor proteins. The protein is Cysteine desulfurase IscS of Haemophilus influenzae (strain PittEE).